A 140-amino-acid polypeptide reads, in one-letter code: Lymphocyte antigen 6H (140 aa).

Positions 1–25 are cleaved as a signal peptide; the sequence is MLPAAMKGLGLALLAVLLCSAPAHG. Residues 26 to 91 form the UPAR/Ly6 domain; sequence LWCQDCTLTT…RHFFSDYLMG (66 aa). Disulfide bonds link cysteine 28/cysteine 52, cysteine 31/cysteine 40, cysteine 45/cysteine 73, and cysteine 77/cysteine 104. N-linked (GlcNAc...) asparagine glycosylation is present at asparagine 36. Glycine 115 carries GPI-anchor amidated glycine lipidation. Residues 116-140 constitute a propeptide, removed in mature form; the sequence is AGHSPWALAGGLLLSLGPALLWAGP.

Interacts with CHRNA4 and CHRNA7.

Its subcellular location is the cell membrane. In terms of biological role, believed to act as a modulator of nicotinic acetylcholine receptors (nAChRs) activity. In vitro inhibits alpha-3:beta-4-containing nAChRs maximum response. May play a role in the intracellular trafficking of alpha-7-containing nAChRs and may inhibit their expression at the cell surface. Seems to inhibit alpha-7/CHRNA7 signaling in hippocampal neurons. The polypeptide is Lymphocyte antigen 6H (LY6H) (Macaca fascicularis (Crab-eating macaque)).